Here is a 444-residue protein sequence, read N- to C-terminus: Probable D-serine dehydratase (444 aa).

Lysine 118 carries the N6-(pyridoxal phosphate)lysine modification.

Belongs to the serine/threonine dehydratase family. DsdA subfamily. It depends on pyridoxal 5'-phosphate as a cofactor.

The catalysed reaction is D-serine = pyruvate + NH4(+). The protein is Probable D-serine dehydratase of Acinetobacter baumannii (strain ATCC 17978 / DSM 105126 / CIP 53.77 / LMG 1025 / NCDC KC755 / 5377).